The chain runs to 249 residues: Large ribosomal subunit protein uL4 (249 aa).

It belongs to the universal ribosomal protein uL4 family. In terms of assembly, part of the 50S ribosomal subunit.

One of the primary rRNA binding proteins, this protein initially binds near the 5'-end of the 23S rRNA. It is important during the early stages of 50S assembly. It makes multiple contacts with different domains of the 23S rRNA in the assembled 50S subunit and ribosome. In terms of biological role, forms part of the polypeptide exit tunnel. The chain is Large ribosomal subunit protein uL4 from Methanospirillum hungatei JF-1 (strain ATCC 27890 / DSM 864 / NBRC 100397 / JF-1).